Consider the following 390-residue polypeptide: Chorismate synthase 1 (390 aa).

NADP(+) contacts are provided by Arg-39 and Arg-45. Residues 95 to 117 (EQEEKEMKRKVTKPRPGHADLNG) form a disordered region. FMN contacts are provided by residues 132–134 (RSS), 253–254 (NA), Gly-298, 313–317 (KPIPT), and Arg-339.

This sequence belongs to the chorismate synthase family. As to quaternary structure, homotetramer. FMNH2 is required as a cofactor.

It carries out the reaction 5-O-(1-carboxyvinyl)-3-phosphoshikimate = chorismate + phosphate. It participates in metabolic intermediate biosynthesis; chorismate biosynthesis; chorismate from D-erythrose 4-phosphate and phosphoenolpyruvate: step 7/7. In terms of biological role, catalyzes the anti-1,4-elimination of the C-3 phosphate and the C-6 proR hydrogen from 5-enolpyruvylshikimate-3-phosphate (EPSP) to yield chorismate, which is the branch point compound that serves as the starting substrate for the three terminal pathways of aromatic amino acid biosynthesis. This reaction introduces a second double bond into the aromatic ring system. The protein is Chorismate synthase 1 of Bacillus cereus (strain ATCC 10987 / NRS 248).